Reading from the N-terminus, the 283-residue chain is 4-diphosphocytidyl-2-C-methyl-D-erythritol kinase (283 aa).

Lysine 10 is an active-site residue. Residue 99 to 109 (PMGGGLGGGSS) coordinates ATP. Aspartate 141 is a catalytic residue.

This sequence belongs to the GHMP kinase family. IspE subfamily. In terms of assembly, homodimer.

The enzyme catalyses 4-CDP-2-C-methyl-D-erythritol + ATP = 4-CDP-2-C-methyl-D-erythritol 2-phosphate + ADP + H(+). It functions in the pathway isoprenoid biosynthesis; isopentenyl diphosphate biosynthesis via DXP pathway; isopentenyl diphosphate from 1-deoxy-D-xylulose 5-phosphate: step 3/6. Functionally, catalyzes the phosphorylation of the position 2 hydroxy group of 4-diphosphocytidyl-2C-methyl-D-erythritol. This Salmonella enteritidis PT4 (strain P125109) protein is 4-diphosphocytidyl-2-C-methyl-D-erythritol kinase.